The sequence spans 262 residues: Hydroxyethylthiazole kinase (262 aa).

Met50 is a substrate binding site. ATP is bound by residues Arg125 and Thr171. Gly198 contributes to the substrate binding site.

Belongs to the Thz kinase family. Mg(2+) serves as cofactor.

The catalysed reaction is 5-(2-hydroxyethyl)-4-methylthiazole + ATP = 4-methyl-5-(2-phosphooxyethyl)-thiazole + ADP + H(+). It participates in cofactor biosynthesis; thiamine diphosphate biosynthesis; 4-methyl-5-(2-phosphoethyl)-thiazole from 5-(2-hydroxyethyl)-4-methylthiazole: step 1/1. In terms of biological role, catalyzes the phosphorylation of the hydroxyl group of 4-methyl-5-beta-hydroxyethylthiazole (THZ). The protein is Hydroxyethylthiazole kinase of Escherichia coli O157:H7.